Consider the following 123-residue polypeptide: Large ribosomal subunit protein bL19 (123 aa).

Belongs to the bacterial ribosomal protein bL19 family.

Its function is as follows. This protein is located at the 30S-50S ribosomal subunit interface and may play a role in the structure and function of the aminoacyl-tRNA binding site. This is Large ribosomal subunit protein bL19 from Laribacter hongkongensis (strain HLHK9).